The chain runs to 481 residues: Pentatricopeptide repeat-containing protein At2g48000 (481 aa).

PPR repeat units follow at residues 147–181, 187–221, 222–256, 257–287, 292–324, 328–362, 364–398, 399–433, and 434–469; these read TTSVYNALMGAYLCNGLSHHCEQLFLDFNSQQDGP, SVSTYNILISLYGRLIMVERMESVFLQLQQLNILP, DSSTYNNLIAGYIYAWDWDKMEATFHSMKNGLVKP, TLATYLLMLRGYANSGNLLRMEDMYQAVKRH, EIKLIESMICAYYRSCHKDRIRKIKTLSKLIPK, KPWLYLLLMQVYAKDDNLHAMENFIDQAITKGLQI, TDGIMRSIVASYFRCNAVDKLAKFVQRANSAGWKM, SRSMFHGLMIMYGSQKRFKEMENVLSEMESFKISR, and SKKTLCILLRVYAATHGQEHKVNQVAGMMLKHGHDF.

It belongs to the PPR family. P subfamily.

This chain is Pentatricopeptide repeat-containing protein At2g48000, found in Arabidopsis thaliana (Mouse-ear cress).